Reading from the N-terminus, the 223-residue chain is 7-cyano-7-deazaguanine synthase (223 aa).

Residue 15 to 25 (FSGGQDSTTCL) participates in ATP binding. Residues Cys191, Cys200, Cys203, and Cys206 each coordinate Zn(2+).

This sequence belongs to the QueC family. As to quaternary structure, homodimer. It depends on Zn(2+) as a cofactor.

The enzyme catalyses 7-carboxy-7-deazaguanine + NH4(+) + ATP = 7-cyano-7-deazaguanine + ADP + phosphate + H2O + H(+). The protein operates within purine metabolism; 7-cyano-7-deazaguanine biosynthesis. Its function is as follows. Catalyzes the ATP-dependent conversion of 7-carboxy-7-deazaguanine (CDG) to 7-cyano-7-deazaguanine (preQ(0)). The protein is 7-cyano-7-deazaguanine synthase of Staphylococcus haemolyticus (strain JCSC1435).